The chain runs to 245 residues: UPF0319 protein VV0984 (245 aa).

Positions methionine 1–alanine 20 are cleaved as a signal peptide.

This sequence belongs to the UPF0319 family.

This chain is UPF0319 protein VV0984, found in Vibrio vulnificus (strain YJ016).